Here is a 797-residue protein sequence, read N- to C-terminus: Discoidin domain-containing receptor tyrosine kinase B (797 aa).

Residues 1–19 (MKLLLYLFGVTFHSNTVVA) form the signal peptide. Topologically, residues 20–384 (LELRECSHQL…VTEHDDGTSM (365 aa)) are extracellular. One can recognise an F5/8 type C domain in the interval 25-181 (CSHQLGMSNR…VCMRVEVFGC (157 aa)). An intrachain disulfide couples Cys-25 to Cys-181. A disordered region spans residues 46 to 66 (SFDLQSTGPQHARAHQESGSG). 4 N-linked (GlcNAc...) asparagine glycosylation sites follow: Asn-141, Asn-167, Asn-264, and Asn-353. The helical transmembrane segment at 385-405 (FAFIIFFFMFLIVAVIILTVL) threads the bilayer. Residues 406-797 (YRKREYRVKA…LVHTSPHIHF (392 aa)) are Cytoplasmic-facing. Residues 527 to 785 (LICVSRIGQG…PSFENVHLHL (259 aa)) form the Protein kinase domain. ATP contacts are provided by residues 533–541 (IGQGEFGEV) and Lys-554. The active-site Proton acceptor is Asp-645.

Belongs to the protein kinase superfamily. Tyr protein kinase family. Insulin receptor subfamily. As to quaternary structure, interacts with shc-1. Autophosphorylated on tyrosine residues. In terms of processing, N-glycosylation at Asn-141 is required for axon regeneration after injury but is dispensable for kinase activity and axon localization. In terms of tissue distribution, expressed in some neurons in head and tail, some motoneurons in ventral nerve cord, in PVP interneurons, seam cells, rectal gland cells, vulva cells and some non-neuronal cells in the tail. Expressed in D-type motor neurons.

It localises to the cell membrane. The protein resides in the cell projection. It is found in the axon. The protein localises to the perikaryon. The enzyme catalyses L-tyrosyl-[protein] + ATP = O-phospho-L-tyrosyl-[protein] + ADP + H(+). Functionally, tyrosine-protein kinase receptor which, together with ddr-1, is involved in axon guidance to establish the tracts for the ventral and dorsal nerve cords during nervous system development. Acts upstream of the adapter shc-1, and the tyrosine kinase receptors svh-1 and svh-2 to regulate axon regeneration following injury in D-type motor neurons. May mediate axon regeneration in association with the collagen emb-9. The polypeptide is Discoidin domain-containing receptor tyrosine kinase B (Caenorhabditis elegans).